The following is a 270-amino-acid chain: Formamidopyrimidine-DNA glycosylase (270 aa).

Proline 2 functions as the Schiff-base intermediate with DNA in the catalytic mechanism. Glutamate 3 serves as the catalytic Proton donor. The active-site Proton donor; for beta-elimination activity is lysine 58. 3 residues coordinate DNA: histidine 91, arginine 110, and arginine 151. The FPG-type zinc finger occupies 236 to 270 (FVYGRGGQPCKVCGTELREVKLGQRASVYCPRCQR). Residue arginine 260 is the Proton donor; for delta-elimination activity of the active site.

It belongs to the FPG family. As to quaternary structure, monomer. It depends on Zn(2+) as a cofactor.

The enzyme catalyses Hydrolysis of DNA containing ring-opened 7-methylguanine residues, releasing 2,6-diamino-4-hydroxy-5-(N-methyl)formamidopyrimidine.. It carries out the reaction 2'-deoxyribonucleotide-(2'-deoxyribose 5'-phosphate)-2'-deoxyribonucleotide-DNA = a 3'-end 2'-deoxyribonucleotide-(2,3-dehydro-2,3-deoxyribose 5'-phosphate)-DNA + a 5'-end 5'-phospho-2'-deoxyribonucleoside-DNA + H(+). In terms of biological role, involved in base excision repair of DNA damaged by oxidation or by mutagenic agents. Acts as a DNA glycosylase that recognizes and removes damaged bases. Has a preference for oxidized purines, such as 7,8-dihydro-8-oxoguanine (8-oxoG). Has AP (apurinic/apyrimidinic) lyase activity and introduces nicks in the DNA strand. Cleaves the DNA backbone by beta-delta elimination to generate a single-strand break at the site of the removed base with both 3'- and 5'-phosphates. The chain is Formamidopyrimidine-DNA glycosylase from Pseudomonas putida (strain ATCC 700007 / DSM 6899 / JCM 31910 / BCRC 17059 / LMG 24140 / F1).